The primary structure comprises 206 residues: MTPQPRRRLVLASQSPARLGLLRQAGLAPEVLVSGVDEEAVTAPTPAELALALAEAKASVVAAKPEVHGALVIGCDSVLDLDGQALGKPADAEEATARWKAMRGRAGTLQTGHCVWDTASGRHVSATASTVVRFGEPTDDEIAAYVASGEPLHVAGAFTLDGRSAPFIDGIDGDHGNVIGLSLPLLRRLLADLGTGITELWAPAED.

The active-site Proton acceptor is the aspartate 76.

This sequence belongs to the Maf family. The cofactor is a divalent metal cation.

Its subcellular location is the cytoplasm. The catalysed reaction is a ribonucleoside 5'-triphosphate + H2O = a ribonucleoside 5'-phosphate + diphosphate + H(+). It catalyses the reaction a 2'-deoxyribonucleoside 5'-triphosphate + H2O = a 2'-deoxyribonucleoside 5'-phosphate + diphosphate + H(+). In terms of biological role, nucleoside triphosphate pyrophosphatase. May have a dual role in cell division arrest and in preventing the incorporation of modified nucleotides into cellular nucleic acids. This Streptomyces coelicolor (strain ATCC BAA-471 / A3(2) / M145) protein is Nucleoside triphosphate pyrophosphatase.